The chain runs to 331 residues: 6-phosphogluconolactonase (331 aa).

This sequence belongs to the cycloisomerase 2 family.

The enzyme catalyses 6-phospho-D-glucono-1,5-lactone + H2O = 6-phospho-D-gluconate + H(+). It functions in the pathway carbohydrate degradation; pentose phosphate pathway; D-ribulose 5-phosphate from D-glucose 6-phosphate (oxidative stage): step 2/3. Functionally, catalyzes the hydrolysis of 6-phosphogluconolactone to 6-phosphogluconate. In Klebsiella pneumoniae subsp. pneumoniae (strain ATCC 700721 / MGH 78578), this protein is 6-phosphogluconolactonase.